Consider the following 409-residue polypeptide: uncharacterized protein (409 aa).

3 disordered regions span residues 12 to 32, 133 to 160, and 194 to 213; these read ENTENQKIEATEETAPTLHCP, EVSTQKSWSSEKNWSGLSQGPGTASREQ, and TVSSKAGRNPSGSPEQGLST. The segment covering 134-160 has biased composition (polar residues); sequence VSTQKSWSSEKNWSGLSQGPGTASREQ.

This is an uncharacterized protein from Mus musculus (Mouse).